A 361-amino-acid chain; its full sequence is Alanine racemase (361 aa).

Residue Lys35 is the Proton acceptor; specific for D-alanine of the active site. Lys35 carries the post-translational modification N6-(pyridoxal phosphate)lysine. A substrate-binding site is contributed by Arg132. The Proton acceptor; specific for L-alanine role is filled by Tyr257. Met305 contributes to the substrate binding site.

Belongs to the alanine racemase family. Pyridoxal 5'-phosphate is required as a cofactor.

The catalysed reaction is L-alanine = D-alanine. It participates in amino-acid biosynthesis; D-alanine biosynthesis; D-alanine from L-alanine: step 1/1. Catalyzes the interconversion of L-alanine and D-alanine. May also act on other amino acids. The chain is Alanine racemase (alr) from Thioalkalivibrio sulfidiphilus (strain HL-EbGR7).